Reading from the N-terminus, the 254-residue chain is MTHPFATKQIPFFLTASAPCPYLPGRFERKVFTRIDIGEGPALNDALTHAGFRRSQGVLYRPACEACDACKSVRIDAEAFEWKRRWRKIAARNRDLHVSIDAQTATMEQFDLLSRYLDSRHGDGDMAGMSFGEYVMMVEEGAQRTHVTEYRDSDGVLRAAALTDVLKDGLSLIYSYFDPEWERRSPGAYMILDAVRQAELAGLPFVYLGYWVRQSRKMSYKAQYQPLQVLTPSGWQPHAELAYHDMEDEEDDFD.

Belongs to the R-transferase family. Bpt subfamily.

It localises to the cytoplasm. It carries out the reaction N-terminal L-glutamyl-[protein] + L-leucyl-tRNA(Leu) = N-terminal L-leucyl-L-glutamyl-[protein] + tRNA(Leu) + H(+). The catalysed reaction is N-terminal L-aspartyl-[protein] + L-leucyl-tRNA(Leu) = N-terminal L-leucyl-L-aspartyl-[protein] + tRNA(Leu) + H(+). In terms of biological role, functions in the N-end rule pathway of protein degradation where it conjugates Leu from its aminoacyl-tRNA to the N-termini of proteins containing an N-terminal aspartate or glutamate. This chain is Aspartate/glutamate leucyltransferase, found in Maricaulis maris (strain MCS10) (Caulobacter maris).